Consider the following 302-residue polypeptide: MSSRNLLYSSVVLFLVLFYCHGGPLEDRVRSTIQEVYKNCRKDKNPGVIVSVVKDGQNVLTEALGVKDKISGEAITTDTLFGLGGISALFANILIAKKNAEYAEMDEDTTLRNLFGNNKLFEKSKLRSRYATSLDVMAHRLGFKNTPHLFLDDTVTRGDPVIQRISSMKPRGRFRDSFYYNELTYSILTTIGERLGRDSWENLVKNEIYTPLGMAKSKFFTTLDPSTVDIARAYKEDDGSLFPVPFEFLKKWSSLCSTTCVLSSANDMSKFMNYLLGQRKPSWTKPCVTGPRKFTLILFDAI.

Positions Met-1–Gly-22 are cleaved as a signal peptide. A helical membrane pass occupies residues Ile-75–Ile-95.

Component of the organic matrix of calcified shell layers.

The protein localises to the membrane. The polypeptide is Gigasin-6 (Magallana gigas (Pacific oyster)).